We begin with the raw amino-acid sequence, 155 residues long: UPF0251 protein Paes_1249 (155 aa).

Belongs to the UPF0251 family.

In Prosthecochloris aestuarii (strain DSM 271 / SK 413), this protein is UPF0251 protein Paes_1249.